The primary structure comprises 556 residues: MKSDIEIAQSVALQPITDIVKKVGIDGDDIELYGKYKAKLSFEKMKAVEANEPGKLLLVTAINPTPAGEGKSTMSIGLADALNQMGKKTMLALREPSLGPVMGIKGGAAGGGYAQVLPMEDINLHFTGDMHAITTANNALSALIDNHLQQGNDLGIDPRRIIWKRVLDLNDRALRQVIVGLGSPVNGVPREDGFDITVASEIMAILCLATDLKDLKKRLADIVVAYTYDRKPVYVRDLKVEGALTLILKDAIKPNLVQTIYGTPALIHGGPFANIAHGCNSVLATSTALRLADYTVTEAGFGADLGAEKFLNIKVPNLPKAPDAIVIVATLRALKMHGGVAKSDLAAENCEAVRLGFANLKRHVENMRQFKVPVVVAINEFVADTEAEIATLKALCEEIKVPVELASVWANGAEGGLALAKTVVRVIDQEAADYKRLYSDEDTLEEKVINIVTQIYGGKAVQFGPKAKTQLKQFAEFGWDKLPVCMAKTQYSFSDNPSLLGAPTDFDITIREFVPKTGAGFIVGLTGDVMTMPGLPKVPAAMAMDVAENGTALGLF.

65 to 72 lines the ATP pocket; it reads TPAGEGKS.

Belongs to the formate--tetrahydrofolate ligase family.

The enzyme catalyses (6S)-5,6,7,8-tetrahydrofolate + formate + ATP = (6R)-10-formyltetrahydrofolate + ADP + phosphate. It functions in the pathway one-carbon metabolism; tetrahydrofolate interconversion. The chain is Formate--tetrahydrofolate ligase 1 from Streptococcus pyogenes serotype M2 (strain MGAS10270).